Consider the following 126-residue polypeptide: Calcitonin receptor-stimulating peptide 1 (126 aa).

A signal peptide spans 1-25 (MGFWKFPPFLVLSILVLYQAGMFHT). Residues 26 to 78 (APMRSAFGSPFDPATLSEEESRLLLAAMVNDYEQMKAREMQKQRAQGSGISVQ) constitute a propeptide that is removed on maturation. Cys-82 and Cys-87 are oxidised to a cystine. Residue Gly-118 is modified to Glycine amide. The propeptide occupies 123–126 (NFWI).

In terms of tissue distribution, mainly expressed in the thyroid gland and CNS. Found in the nerve cells of cerebrum, hippocampus, hypothalamus, pons/midbrain and thalamus.

The protein localises to the secreted. Functionally, stimulates cAMP production in porcine kidney cell line LLC-PK1 via the calcitonin receptor (CT) but not via the CT-like (CL) receptor. In Sus scrofa (Pig), this protein is Calcitonin receptor-stimulating peptide 1 (CRSP1).